The sequence spans 213 residues: ER lumen protein-retaining receptor erd-2.2 (213 aa).

The Lumenal segment spans residues 1-2 (MN). The chain crosses the membrane as a helical span at residues 3–21 (IFRISADMSHLLAIIILLL). Residues 22–35 (KIWKSRSCSGISAR) lie on the Cytoplasmic side of the membrane. Residues 36-53 (SQILFALVFTARYLDLFS) traverse the membrane as a helical segment. The Lumenal portion of the chain corresponds to 54-61 (TYISLYNT). A helical transmembrane segment spans residues 62-80 (TMKITFLAATYATVYLMFF). The Cytoplasmic portion of the chain corresponds to 81–96 (KFRSTYMRESDTFRVE). The helical transmembrane segment at 97-110 (LLIVPAAILALLIN) threads the bilayer. Residues 111–117 (HDFAPFE) lie on the Lumenal side of the membrane. A helical membrane pass occupies residues 118-137 (LLWTFSIYLEAVAILPQLFL). Topologically, residues 138–149 (LQSTGSAEVITA) are cytoplasmic. The chain crosses the membrane as a helical span at residues 150-168 (HYLFALGSYRALYIFNWIY). The Lumenal portion of the chain corresponds to 169–178 (RYYTEDYFDP). A helical transmembrane segment spans residues 179–199 (IVVVAGIVQTVLYADFFYLYV). At 200–213 (TRVVQTRKGMELPI) the chain is on the cytoplasmic side.

Belongs to the ERD2 family.

It is found in the endoplasmic reticulum membrane. In terms of biological role, required for the retention of luminal endoplasmic reticulum proteins. Determines the specificity of the luminal ER protein retention system. Also required for normal vesicular traffic through the Golgi. The polypeptide is ER lumen protein-retaining receptor erd-2.2 (Caenorhabditis elegans).